We begin with the raw amino-acid sequence, 597 residues long: Elongation factor 4 (597 aa).

Residues 2-184 (NNIRNFSIIA…SLITKVPPPK (183 aa)) enclose the tr-type G domain. GTP-binding positions include 14–19 (DHGKST) and 131–134 (NKID).

The protein belongs to the TRAFAC class translation factor GTPase superfamily. Classic translation factor GTPase family. LepA subfamily.

It localises to the cell inner membrane. The enzyme catalyses GTP + H2O = GDP + phosphate + H(+). Its function is as follows. Required for accurate and efficient protein synthesis under certain stress conditions. May act as a fidelity factor of the translation reaction, by catalyzing a one-codon backward translocation of tRNAs on improperly translocated ribosomes. Back-translocation proceeds from a post-translocation (POST) complex to a pre-translocation (PRE) complex, thus giving elongation factor G a second chance to translocate the tRNAs correctly. Binds to ribosomes in a GTP-dependent manner. The chain is Elongation factor 4 from Janthinobacterium sp. (strain Marseille) (Minibacterium massiliensis).